Here is a 1068-residue protein sequence, read N- to C-terminus: Sucrose-phosphate synthase (1068 aa).

Disordered regions lie at residues 18–47 (HTSS…GAHM) and 118–139 (KEQE…SEGE). Residues 23-32 (GAGGGGGGGD) show a composition bias toward gly residues. A compositionally biased stretch (basic and acidic residues) spans 118 to 128 (KEQEQVRREAT).

This sequence belongs to the glycosyltransferase 1 family. In terms of assembly, homodimer or homotetramer.

The catalysed reaction is beta-D-fructose 6-phosphate + UDP-alpha-D-glucose = sucrose 6(F)-phosphate + UDP + H(+). The protein operates within glycan biosynthesis; sucrose biosynthesis; sucrose from D-fructose 6-phosphate and UDP-alpha-D-glucose: step 1/2. Its activity is regulated as follows. Activity is regulated by phosphorylation and moderated by concentration of metabolites and light. In terms of biological role, plays a role in photosynthetic sucrose synthesis by catalyzing the rate-limiting step of sucrose biosynthesis from UDP-glucose and fructose- 6-phosphate. Involved in the regulation of carbon partitioning in the leaves of plants. May regulate the synthesis of sucrose and therefore play a major role as a limiting factor in the export of photoassimilates out of the leaf. Plays a role for sucrose availability that is essential for plant growth and fiber elongation. This Zea mays (Maize) protein is Sucrose-phosphate synthase.